The sequence spans 207 residues: Nudix hydrolase 4 (207 aa).

The region spanning Gly-58–Ile-194 is the Nudix hydrolase domain. The Nudix box signature appears at Gly-101 to Gly-122. Positions 116 and 120 each coordinate Mg(2+).

It belongs to the Nudix hydrolase family. Requires Mg(2+) as cofactor. Mn(2+) serves as cofactor. As to expression, expressed in roots, stems and leaves.

The catalysed reaction is ADP-D-ribose + H2O = D-ribose 5-phosphate + AMP + 2 H(+). It carries out the reaction NAD(+) + H2O = beta-nicotinamide D-ribonucleotide + AMP + 2 H(+). The enzyme catalyses NADH + H2O = reduced beta-nicotinamide D-ribonucleotide + AMP + 2 H(+). Functionally, probably mediates the hydrolysis of some nucleoside diphosphate derivatives. In vitro, it can use both NADH and ADP-ribose as substrates; however the relevance of such substrates in vivo is unclear. The polypeptide is Nudix hydrolase 4 (NUDT4) (Arabidopsis thaliana (Mouse-ear cress)).